The chain runs to 213 residues: Uridine kinase (213 aa).

Residue 15–22 (GASASGKS) coordinates ATP.

Belongs to the uridine kinase family.

The protein resides in the cytoplasm. It carries out the reaction uridine + ATP = UMP + ADP + H(+). The catalysed reaction is cytidine + ATP = CMP + ADP + H(+). Its pathway is pyrimidine metabolism; CTP biosynthesis via salvage pathway; CTP from cytidine: step 1/3. The protein operates within pyrimidine metabolism; UMP biosynthesis via salvage pathway; UMP from uridine: step 1/1. In Enterobacter sp. (strain 638), this protein is Uridine kinase.